We begin with the raw amino-acid sequence, 185 residues long: Elongation factor P (185 aa).

Belongs to the elongation factor P family.

The protein localises to the cytoplasm. Its pathway is protein biosynthesis; polypeptide chain elongation. In terms of biological role, involved in peptide bond synthesis. Stimulates efficient translation and peptide-bond synthesis on native or reconstituted 70S ribosomes in vitro. Probably functions indirectly by altering the affinity of the ribosome for aminoacyl-tRNA, thus increasing their reactivity as acceptors for peptidyl transferase. This Bacillus cytotoxicus (strain DSM 22905 / CIP 110041 / 391-98 / NVH 391-98) protein is Elongation factor P.